We begin with the raw amino-acid sequence, 517 residues long: MSDTNKQVRVRFAPSPTGPLHIGGVRTALYNYLFARKMGGKMLLRIEDTDQNRFVPGAEAYIQEALAWVGIVIDEGAGVGGPHAPYKQSERKPMYREYAEKLIAEGNAYYAFDTSEELEAMKERLKAAKVASPSYNMVTRMQMNNSLTLPEDEVKRRLDAGDEYVIRLKVPRKEEIRLNDMIRGWVVVHSSTIDDKVLLKSDGMPTYHLANIVDDHLMEITHVIRGEEWLPSAPLHVLLYRFLGWEDTMPQFAHLPLLLKPDGNGKLSKRDADAGGFPIFPLDWKDPASGDTWIGFKQQGYLQEATTNFLAFLGWNPGTQQELFTMDELIEAFTVERIGKSGTKFDINKAKWYNQQYMRQLPDETLTRLLKEEADKHQAKYDAAKLPLIAQMLKERLTFAKDYWIEGQFFFEAPETFDEKVASTKWNAEAVTVISAYKEALAAYTGEFNAENVKHVLHEVLEKADVKIGKIMQALRLALTGAGAGPDLMQFIEIVGKEEAIKRMQFALITLSEKVNS.

A 'HIGH' region motif is present at residues 14 to 24; sequence PSPTGPLHIGG. The short motif at 266-270 is the 'KMSKS' region element; the sequence is KLSKR. Lysine 269 contacts ATP.

The protein belongs to the class-I aminoacyl-tRNA synthetase family. Glutamate--tRNA ligase type 1 subfamily. Monomer.

It localises to the cytoplasm. It carries out the reaction tRNA(Glu) + L-glutamate + ATP = L-glutamyl-tRNA(Glu) + AMP + diphosphate. Functionally, catalyzes the attachment of glutamate to tRNA(Glu) in a two-step reaction: glutamate is first activated by ATP to form Glu-AMP and then transferred to the acceptor end of tRNA(Glu). The protein is Glutamate--tRNA ligase of Cytophaga hutchinsonii (strain ATCC 33406 / DSM 1761 / CIP 103989 / NBRC 15051 / NCIMB 9469 / D465).